Here is a 1612-residue protein sequence, read N- to C-terminus: Phospholipid-transporting ATPase DNF2 (1612 aa).

Residues 1–74 (MSSPSKPTSP…MKDISTPDLS (74 aa)) form a disordered region. Topologically, residues 1 to 252 (MSSPSKPTSP…TFFPKNILFQ (252 aa)) are cytoplasmic. Positions 20-30 (GSASNGLSSMS) are enriched in low complexity. A Phosphothreonine modification is found at T70. At S85 the chain carries Phosphoserine. A helical membrane pass occupies residues 253 to 273 (FHNFANIYFLILLILGAFQIF). An involved in phosphatidylcholine substrate selection region spans residues 272–279 (IFGVTNPG). At 274–277 (GVTN) the chain is on the extracellular side. A helical membrane pass occupies residues 278 to 298 (PGFASVPLIVIVIITAIKDGI). The Cytoplasmic segment spans residues 299–598 (EDSRRTVLDL…RISRELNFSV (300 aa)). Residues 364–373 (KLQKKREELR) show a composition bias toward basic and acidic residues. Residues 364 to 384 (KLQKKREELRRKRNSRSFGPR) form a disordered region. Phosphoserine occurs at positions 389, 392, 396, and 403. Y406 carries the post-translational modification Phosphotyrosine. The chain crosses the membrane as a helical span at residues 599–619 (ILNFVLLFILCFTAGIVNGVY). Topologically, residues 620-639 (YKQKPRSRDYFEFGTIGGSA) are extracellular. The involved in phosphatidylcholine substrate selection stretch occupies residues 631 to 635 (EFGTI). A helical transmembrane segment spans residues 640 to 660 (STNGFVSFWVAVILYQSLVPI). Over 661–1231 (SLYISVEIIK…WCYKRLAEMI (571 aa)) the chain is Cytoplasmic. The 4-aspartylphosphate intermediate role is filled by D712. ATP is bound by residues D712, K713, and T714. D712 serves as a coordination point for Mg(2+). Position 714 (T714) interacts with Mg(2+). T782 is subject to Phosphothreonine. Residues E846, F887, S889, K892, and K916 each coordinate ATP. K938 is covalently cross-linked (Glycyl lysine isopeptide (Lys-Gly) (interchain with G-Cter in ubiquitin)). The ATP site is built by R952, T953, T1032, G1033, D1034, R1147, and K1153. D1173 is a binding site for Mg(2+). Positions 1176 and 1177 each coordinate ATP. Position 1177 (D1177) interacts with Mg(2+). The helical transmembrane segment at 1232–1252 (PQFFYKNVIFTLSLFWYGIYN) threads the bilayer. The Extracellular portion of the chain corresponds to 1253–1262 (NFDGSYLFEY). Residues 1263-1283 (TYLTFYNLAFTSVPVILLAVL) form a helical membrane-spanning segment. Residues 1284–1313 (DQDVSDTVSMLVPQLYRVGILRKEWNQTKF) lie on the Cytoplasmic side of the membrane. The chain crosses the membrane as a helical span at residues 1314 to 1334 (LWYMLDGVYQSVICFFFPYLA). At 1335–1350 (YHKNMVVTENGLGLDH) the chain is on the extracellular side. Residues 1351–1371 (RYFVGVFVTAIAVTSCNFYVF) traverse the membrane as a helical segment. Topologically, residues 1372-1377 (MEQYRW) are cytoplasmic. A helical membrane pass occupies residues 1378-1398 (DWFCGLFICLSLAVFYGWTGI). The Extracellular portion of the chain corresponds to 1399–1418 (WTSSSSSNEFYKGAARVFAQ). Residues 1419–1439 (PAYWAVLFVGVLFCLLPRFTI) form a helical membrane-spanning segment. R1436 is a binding site for a 1,2-diacyl-sn-glycero-3-phospho-L-serine. The Cytoplasmic portion of the chain corresponds to 1440–1612 (DCIRKIFYPK…TLLSQRSRDR (173 aa)). S1542 carries the phosphoserine modification. Positions 1544-1563 (VTTTNNLPRRSMASARGNKL) are disordered. S1592 is subject to Phosphoserine.

The protein belongs to the cation transport ATPase (P-type) (TC 3.A.3) family. Type IV subfamily. As to quaternary structure, component of a flippase complex consisting of DNF1 and LEM3. Interacts with LEM3; the interaction is direct. The cofactor is Mg(2+). Phosphorylated by FPK1 and KIN82.

Its subcellular location is the cell membrane. The enzyme catalyses ATP + H2O + phospholipidSide 1 = ADP + phosphate + phospholipidSide 2.. It catalyses the reaction a 1,2-diacyl-sn-glycero-3-phosphoethanolamine(out) + ATP + H2O = a 1,2-diacyl-sn-glycero-3-phosphoethanolamine(in) + ADP + phosphate + H(+). It carries out the reaction a 1,2-diacyl-sn-glycero-3-phosphocholine(out) + ATP + H2O = a 1,2-diacyl-sn-glycero-3-phosphocholine(in) + ADP + phosphate + H(+). The catalysed reaction is a beta-D-glucosyl-(1&lt;-&gt;1')-N-acylsphing-4-enine(out) + ATP + H2O = a beta-D-glucosyl-(1&lt;-&gt;1')-N-acylsphing-4-enine(in) + ADP + phosphate + H(+). The enzyme catalyses a 1,2-diacyl-sn-glycero-3-phospho-L-serine(out) + ATP + H2O = a 1,2-diacyl-sn-glycero-3-phospho-L-serine(in) + ADP + phosphate + H(+). Phosphatidylcholine flippase activity is inhibited by glucosylsphingosine, lactosylsphingosine, lysophosphatidylcholine and to a lesser degree sphingosine-1-phosphate and lysosphingomyelin. Glucosylceramide flippase activity is inhibited by lysophosphatidylcholine, glucosylsphingosine and to a lesser degree lactosylsphingosine whereas lysosphingomyelin has a stimulatory effect at low concentrations. Its function is as follows. Catalytic component of a P4-ATPase flippase complex which catalyzes the hydrolysis of ATP coupled to the transport of glucosylceramide, phosphatidylcholine, phosphatidylethanolamine, and small amounts of phosphatidylserine from the lumenal to the cytosolic leaflet of the cell membrane and ensures the maintenance of asymmetric distribution of phospholipids. Does not appear to transport sphingomyelin, inositol phosphoceramide or phosphatidic acid. Required for efficient endocytosis. Required for protein transport from Golgi to vacuoles. This Saccharomyces cerevisiae (strain ATCC 204508 / S288c) (Baker's yeast) protein is Phospholipid-transporting ATPase DNF2 (DNF2).